Reading from the N-terminus, the 339-residue chain is MNQRNASMTVIGAGSYGTALAITLARNGHEVVLWGHDPEHIATLKRDRCNAAFLPDVPFPDTLHLESDLATALAASRNILVVVPSHVFGEVLRQIKPLMRPDARLVWATKGLEAETGRLLQDVAREALGDQIPLAVISGPTFAKELAAGLPTAISLASTDQTFADDLQQLLHCGKSFRVYSNPDFIGVQLGGAVKNVIAIGAGMSDGIGFGANARTALITRGLAEMSRLGAALGADPATFMGMAGLGDLVLTCTDNQSRNRRFGMMLGQGMDVQSAQEKIGQVVEGYRNTKEVRELAHRFGVEMPITEEIYQVLYCGKNAREAALTLLGRARKDERSSH.

The NADPH site is built by Ser15, Tyr16, His36, and Lys110. Sn-glycerol 3-phosphate contacts are provided by Lys110, Gly139, and Thr141. Ala143 is an NADPH binding site. Sn-glycerol 3-phosphate-binding residues include Lys195, Asp248, Ser258, Arg259, and Asn260. The active-site Proton acceptor is Lys195. Arg259 provides a ligand contact to NADPH. The NADPH site is built by Val283 and Glu285.

It belongs to the NAD-dependent glycerol-3-phosphate dehydrogenase family.

The protein resides in the cytoplasm. The catalysed reaction is sn-glycerol 3-phosphate + NAD(+) = dihydroxyacetone phosphate + NADH + H(+). It catalyses the reaction sn-glycerol 3-phosphate + NADP(+) = dihydroxyacetone phosphate + NADPH + H(+). The protein operates within membrane lipid metabolism; glycerophospholipid metabolism. In terms of biological role, catalyzes the reduction of the glycolytic intermediate dihydroxyacetone phosphate (DHAP) to sn-glycerol 3-phosphate (G3P), the key precursor for phospholipid synthesis. The chain is Glycerol-3-phosphate dehydrogenase [NAD(P)+] from Escherichia fergusonii (strain ATCC 35469 / DSM 13698 / CCUG 18766 / IAM 14443 / JCM 21226 / LMG 7866 / NBRC 102419 / NCTC 12128 / CDC 0568-73).